Here is a 251-residue protein sequence, read N- to C-terminus: Probable transcriptional regulatory protein DehaBAV1_0421 (251 aa).

This sequence belongs to the TACO1 family.

The protein resides in the cytoplasm. This chain is Probable transcriptional regulatory protein DehaBAV1_0421, found in Dehalococcoides mccartyi (strain ATCC BAA-2100 / JCM 16839 / KCTC 5957 / BAV1).